The following is a 418-amino-acid chain: D-amino acid dehydrogenase (418 aa).

Residue 3–17 (VTILGAGVVGVTSAW) participates in FAD binding.

It belongs to the DadA oxidoreductase family. The cofactor is FAD.

The catalysed reaction is a D-alpha-amino acid + A + H2O = a 2-oxocarboxylate + AH2 + NH4(+). The protein operates within amino-acid degradation; D-alanine degradation; NH(3) and pyruvate from D-alanine: step 1/1. Its function is as follows. Oxidative deamination of D-amino acids. The protein is D-amino acid dehydrogenase of Agrobacterium fabrum (strain C58 / ATCC 33970) (Agrobacterium tumefaciens (strain C58)).